Here is a 149-residue protein sequence, read N- to C-terminus: Large ribosomal subunit protein bL9 (149 aa).

The protein belongs to the bacterial ribosomal protein bL9 family.

Binds to the 23S rRNA. This Aliivibrio fischeri (strain ATCC 700601 / ES114) (Vibrio fischeri) protein is Large ribosomal subunit protein bL9.